A 369-amino-acid chain; its full sequence is Methylthioribose-1-phosphate isomerase (369 aa).

Met1 carries the N-acetylmethionine modification. The residue at position 158 (Arg158) is an Omega-N-methylarginine. The active-site Proton donor is the Asp248. Ser366 is subject to Phosphoserine.

This sequence belongs to the eIF-2B alpha/beta/delta subunits family. MtnA subfamily.

Its subcellular location is the cytoplasm. It localises to the nucleus. It carries out the reaction 5-(methylsulfanyl)-alpha-D-ribose 1-phosphate = 5-(methylsulfanyl)-D-ribulose 1-phosphate. The protein operates within amino-acid biosynthesis; L-methionine biosynthesis via salvage pathway; L-methionine from S-methyl-5-thio-alpha-D-ribose 1-phosphate: step 1/6. In terms of biological role, catalyzes the interconversion of methylthioribose-1-phosphate (MTR-1-P) into methylthioribulose-1-phosphate (MTRu-1-P). This chain is Methylthioribose-1-phosphate isomerase (Mri1), found in Rattus norvegicus (Rat).